The primary structure comprises 181 residues: Disulfide bond formation protein B (181 aa).

Over 1 to 13 (MLSVGQWPNKPFA) the chain is Cytoplasmic. The chain crosses the membrane as a helical span at residues 14-30 (WLLLFLGCSGLLGAALY). Residues 31-48 (FQMVLNLEPCVKCVYQRM) are Periplasmic-facing. Cysteine 40 and cysteine 43 are disulfide-bonded. Residues 49–64 (AVIGIGLSAIVGLFGS) traverse the membrane as a helical segment. Residues 65-71 (GLWLTRW) are Cytoplasmic-facing. The chain crosses the membrane as a helical span at residues 72–89 (AALIGWLYSSYQGLLIAY). The Periplasmic portion of the chain corresponds to 90 to 145 (DHWDLQTSKNAFFAVCESAPNFPDWAPMHEWMPGLFAAPGLCGDIDWQWLGLGMPG). A disulfide bridge links cysteine 105 with cysteine 131. The helical transmembrane segment at 146 to 164 (WMTVIFAGLLLIGIIVTIC) threads the bilayer. The Cytoplasmic segment spans residues 165-181 (HIISSFTKKDGLVLYHK).

The protein belongs to the DsbB family.

It localises to the cell inner membrane. Its function is as follows. Required for disulfide bond formation in some periplasmic proteins. Acts by oxidizing the DsbA protein. In Idiomarina loihiensis (strain ATCC BAA-735 / DSM 15497 / L2-TR), this protein is Disulfide bond formation protein B.